The following is a 65-amino-acid chain: Large ribosomal subunit protein uL29 (65 aa).

This sequence belongs to the universal ribosomal protein uL29 family.

The chain is Large ribosomal subunit protein uL29 from Desulforapulum autotrophicum (strain ATCC 43914 / DSM 3382 / VKM B-1955 / HRM2) (Desulfobacterium autotrophicum).